Here is a 233-residue protein sequence, read N- to C-terminus: Large ribosomal subunit protein uL1 (233 aa).

It belongs to the universal ribosomal protein uL1 family. As to quaternary structure, part of the 50S ribosomal subunit.

In terms of biological role, binds directly to 23S rRNA. The L1 stalk is quite mobile in the ribosome, and is involved in E site tRNA release. Its function is as follows. Protein L1 is also a translational repressor protein, it controls the translation of the L11 operon by binding to its mRNA. In Shewanella denitrificans (strain OS217 / ATCC BAA-1090 / DSM 15013), this protein is Large ribosomal subunit protein uL1.